The primary structure comprises 398 residues: NADH-quinone oxidoreductase subunit D (398 aa).

Belongs to the complex I 49 kDa subunit family. As to quaternary structure, NDH-1 is composed of 14 different subunits. Subunits NuoB, C, D, E, F, and G constitute the peripheral sector of the complex.

Its subcellular location is the cell inner membrane. The catalysed reaction is a quinone + NADH + 5 H(+)(in) = a quinol + NAD(+) + 4 H(+)(out). Its function is as follows. NDH-1 shuttles electrons from NADH, via FMN and iron-sulfur (Fe-S) centers, to quinones in the respiratory chain. The immediate electron acceptor for the enzyme in this species is believed to be ubiquinone. Couples the redox reaction to proton translocation (for every two electrons transferred, four hydrogen ions are translocated across the cytoplasmic membrane), and thus conserves the redox energy in a proton gradient. In Bradyrhizobium sp. (strain BTAi1 / ATCC BAA-1182), this protein is NADH-quinone oxidoreductase subunit D.